The primary structure comprises 65 residues: MPKIKTHRGAAKRFSKTGTGKIKRSHAFTSHILTSKTRKNKRNLRKGAIVEAVDHKNIAKLIPYM.

The segment covering 1-26 (MPKIKTHRGAAKRFSKTGTGKIKRSH) has biased composition (basic residues). Residues 1 to 41 (MPKIKTHRGAAKRFSKTGTGKIKRSHAFTSHILTSKTRKNK) are disordered.

This sequence belongs to the bacterial ribosomal protein bL35 family.

The polypeptide is Large ribosomal subunit protein bL35 (Geotalea daltonii (strain DSM 22248 / JCM 15807 / FRC-32) (Geobacter daltonii)).